A 130-amino-acid polypeptide reads, in one-letter code: Histone H2A type 1-E (130 aa).

Positions 1 to 22 are disordered; it reads MSGRGKQGGKARAKAKTRSSRA. The residue at position 2 (Ser-2) is an N-acetylserine. Ser-2 is modified (phosphoserine; by RPS6KA5). Position 4 is a citrulline; alternate (Arg-4). A Symmetric dimethylarginine; by PRMT5; alternate modification is found at Arg-4. N6-(2-hydroxyisobutyryl)lysine; alternate is present on residues Lys-6 and Lys-10. N6-acetyllysine; alternate is present on Lys-6. Over residues 7–19 the composition is skewed to basic residues; the sequence is QGGKARAKAKTRS. N6-lactoyllysine; alternate is present on Lys-10. Residue Lys-10 is modified to N6-succinyllysine; alternate. Glycyl lysine isopeptide (Lys-Gly) (interchain with G-Cter in ubiquitin) cross-links involve residues Lys-14 and Lys-16. Lys-37 carries the post-translational modification N6-(2-hydroxyisobutyryl)lysine; alternate. Lys-37 carries the N6-(beta-hydroxybutyryl)lysine; alternate modification. Lys-37 bears the N6-crotonyllysine; alternate mark. Lys-75 and Lys-76 each carry N6-(2-hydroxyisobutyryl)lysine. Lys-96 is modified (N6-(2-hydroxyisobutyryl)lysine; alternate). Position 96 is an N6-succinyllysine; alternate (Lys-96). Lys-96 is subject to N6-glutaryllysine; alternate. N5-methylglutamine is present on Gln-105. N6-(2-hydroxyisobutyryl)lysine; alternate is present on Lys-119. 2 positions are modified to N6-crotonyllysine; alternate: Lys-119 and Lys-120. Residues Lys-119 and Lys-120 each carry the N6-glutaryllysine; alternate modification. Residue Lys-120 forms a Glycyl lysine isopeptide (Lys-Gly) (interchain with G-Cter in ubiquitin); alternate linkage. The residue at position 121 (Thr-121) is a Phosphothreonine; by DCAF1. Lys-126 is modified (N6-crotonyllysine; alternate). An N6-glutaryllysine; alternate modification is found at Lys-126.

This sequence belongs to the histone H2A family. In terms of assembly, the nucleosome is a histone octamer containing two molecules each of H2A, H2B, H3 and H4 assembled in one H3-H4 heterotetramer and two H2A-H2B heterodimers. The octamer wraps approximately 147 bp of DNA. Post-translationally, deiminated on Arg-4 in granulocytes upon calcium entry. Monoubiquitination of Lys-120 (H2AK119Ub) by RING1, TRIM37 and RNF2/RING2 complex gives a specific tag for epigenetic transcriptional repression and participates in X chromosome inactivation of female mammals. It is involved in the initiation of both imprinted and random X inactivation. Ubiquitinated H2A is enriched in inactive X chromosome chromatin. Ubiquitination of H2A functions downstream of methylation of 'Lys-27' of histone H3 (H3K27me). H2AK119Ub by RNF2/RING2 can also be induced by ultraviolet and may be involved in DNA repair. Following DNA double-strand breaks (DSBs), it is ubiquitinated through 'Lys-63' linkage of ubiquitin moieties by the E2 ligase UBE2N and the E3 ligases RNF8 and RNF168, leading to the recruitment of repair proteins to sites of DNA damage. Ubiquitination at Lys-14 and Lys-16 (H2AK13Ub and H2AK15Ub, respectively) in response to DNA damage is initiated by RNF168 that mediates monoubiquitination at these 2 sites, and 'Lys-63'-linked ubiquitin are then conjugated to monoubiquitin; RNF8 is able to extend 'Lys-63'-linked ubiquitin chains in vitro. H2AK119Ub and ionizing radiation-induced 'Lys-63'-linked ubiquitination (H2AK13Ub and H2AK15Ub) are distinct events. In terms of processing, phosphorylation on Ser-2 (H2AS1ph) is enhanced during mitosis. Phosphorylation on Ser-2 by RPS6KA5/MSK1 directly represses transcription. Acetylation of H3 inhibits Ser-2 phosphorylation by RPS6KA5/MSK1. Phosphorylation at Thr-121 (H2AT120ph) by DCAF1 is present in the regulatory region of many tumor suppresor genes and down-regulates their transcription. Post-translationally, symmetric dimethylation on Arg-4 by the PRDM1/PRMT5 complex may play a crucial role in the germ-cell lineage. Glutamine methylation at Gln-105 (H2AQ104me) by FBL is specifically dedicated to polymerase I. It is present at 35S ribosomal DNA locus and impairs binding of the FACT complex. In terms of processing, crotonylation (Kcr) is specifically present in male germ cells and marks testis-specific genes in post-meiotic cells, including X-linked genes that escape sex chromosome inactivation in haploid cells. Crotonylation marks active promoters and enhancers and confers resistance to transcriptional repressors. It is also associated with post-meiotically activated genes on autosomes. Post-translationally, lactylated in macrophages by EP300/P300 by using lactoyl-CoA directly derived from endogenous or exogenous lactate, leading to stimulates gene transcription.

The protein resides in the nucleus. Its subcellular location is the chromosome. Its function is as follows. Core component of nucleosome. Nucleosomes wrap and compact DNA into chromatin, limiting DNA accessibility to the cellular machineries which require DNA as a template. Histones thereby play a central role in transcription regulation, DNA repair, DNA replication and chromosomal stability. DNA accessibility is regulated via a complex set of post-translational modifications of histones, also called histone code, and nucleosome remodeling. The protein is Histone H2A type 1-E of Rattus norvegicus (Rat).